The primary structure comprises 323 residues: O-phosphoserine sulfhydrylase (323 aa).

Lys-51 is subject to N6-(pyridoxal phosphate)lysine. Pyridoxal 5'-phosphate is bound by residues Asn-81 and 184–188; that span reads GTTGT. Arg-220 provides a ligand contact to substrate. Ser-265 contributes to the pyridoxal 5'-phosphate binding site.

It belongs to the cysteine synthase/cystathionine beta-synthase family. In terms of assembly, homodimer. Pyridoxal 5'-phosphate is required as a cofactor.

The catalysed reaction is [CysO sulfur-carrier protein]-C-terminal-Gly-aminoethanethioate + O-phospho-L-serine + H(+) = [CysO sulfur-carrier protein]-Gly-NH-CH2-C(O)-S-L-Cys + phosphate. The protein operates within amino-acid biosynthesis; L-cysteine biosynthesis. In terms of biological role, catalyzes the formation of a covalent CysO-cysteine adduct via a sulfur transfer, using the thiocarboxylated sulfur carrier protein CysO-COSH as sulfur donor and O-phospho-L-serine (OPS) as sulfur acceptor. Can also use sodium sulfide as sulfur donor in vitro, albeit with less efficiency. This chain is O-phosphoserine sulfhydrylase (cysM), found in Mycobacterium bovis (strain ATCC BAA-935 / AF2122/97).